The primary structure comprises 397 residues: Enoyl-[acyl-carrier-protein] reductase [NADH] (397 aa).

Residues 48-53 (GASTGY), 74-75 (FE), 111-112 (DA), and 139-140 (VA) contribute to the NAD(+) site. Position 225 (tyrosine 225) interacts with substrate. The active-site Proton donor is tyrosine 235. Residues lysine 244 and 273-275 (VVT) each bind NAD(+).

It belongs to the TER reductase family. Monomer.

The catalysed reaction is a 2,3-saturated acyl-[ACP] + NAD(+) = a (2E)-enoyl-[ACP] + NADH + H(+). It functions in the pathway lipid metabolism; fatty acid biosynthesis. Its function is as follows. Involved in the final reduction of the elongation cycle of fatty acid synthesis (FAS II). Catalyzes the reduction of a carbon-carbon double bond in an enoyl moiety that is covalently linked to an acyl carrier protein (ACP). The polypeptide is Enoyl-[acyl-carrier-protein] reductase [NADH] (Burkholderia thailandensis (strain ATCC 700388 / DSM 13276 / CCUG 48851 / CIP 106301 / E264)).